Reading from the N-terminus, the 1027-residue chain is Contactin-5 (1027 aa).

The N-terminal stretch at 1 to 19 (MMWLSWKLFLFLSLIGCLS) is a signal peptide. Ig-like C2-type domains are found at residues 32-117 (PDDV…AVLQ), 123-209 (NFSG…RVLS), 227-307 (PKIE…RNVF), 317-401 (PQWV…AELK), 407-494 (PTFP…ASVS), and 498-593 (PTRI…TELL). A disulfide bridge connects residues Cys50 and Cys100. N-linked (GlcNAc...) asparagine glycosylation is found at Asn65 and Asn123. Disulfide bonds link Cys144–Cys196 and Cys249–Cys296. Residues Asn324, Asn376, and Asn467 are each glycosylated (N-linked (GlcNAc...) asparagine). 3 disulfides stabilise this stretch: Cys338–Cys385, Cys430–Cys478, and Cys520–Cys577. Fibronectin type-III domains lie at 600–698 (PPGV…TNEA), 703–800 (PPAN…SAEG), 805–899 (APID…TKKS), and 901–994 (PSQA…SYAG). Asn706, Asn743, Asn858, and Asn929 each carry an N-linked (GlcNAc...) asparagine glycan. A lipid anchor (GPI-anchor amidated serine) is attached at Ser999. Residues 1000–1027 (AQSTLHMFSTSSSSVTLLLVLMVPSTSW) constitute a propeptide, removed in mature form.

This sequence belongs to the immunoglobulin superfamily. Contactin family. As to quaternary structure, interacts with INgCAM/L1 and the tenascin-R TNP protein. Does not interacts with NrCAM. Expressed by subpopulations of Purkinje cells in the cerebellum. Also expressed by one type of Purkinje cell afferents, the climbing fibers.

It is found in the cell membrane. Its function is as follows. Contactins mediate cell surface interactions during nervous system development. May contribute to the formation of somatotopic maps of cerebellar afferents during the development of the nervous system. This is Contactin-5 (CNTN5) from Gallus gallus (Chicken).